Consider the following 228-residue polypeptide: NAD(P)H-hydrate epimerase (228 aa).

The region spanning 9-209 (VRAVERLAHR…LLGLTPAFLA (201 aa)) is the YjeF N-terminal domain. Position 53-57 (53-57 (NNGGD)) interacts with (6S)-NADPHX. Positions 54 and 115 each coordinate K(+). Residues 119–125 (GIGLARP) and D148 each bind (6S)-NADPHX. S151 is a K(+) binding site.

It belongs to the NnrE/AIBP family. K(+) is required as a cofactor.

It catalyses the reaction (6R)-NADHX = (6S)-NADHX. It carries out the reaction (6R)-NADPHX = (6S)-NADPHX. Functionally, catalyzes the epimerization of the S- and R-forms of NAD(P)HX, a damaged form of NAD(P)H that is a result of enzymatic or heat-dependent hydration. This is a prerequisite for the S-specific NAD(P)H-hydrate dehydratase to allow the repair of both epimers of NAD(P)HX. This chain is NAD(P)H-hydrate epimerase, found in Bordetella pertussis (strain CS).